The chain runs to 392 residues: ESX-1 secretion-associated protein EspA (392 aa).

The interval 302–392 (TRQALRPRAD…GQKVLVRNVV (91 aa)) is disordered. Over residues 334–344 (QGMGGPVGMGG) the composition is skewed to gly residues.

Homodimer; disulfide-linked.

It localises to the secreted. Functionally, required for secretion of EsxA (ESAT-6) and EsxB (CFP-10) and for virulence. The polypeptide is ESX-1 secretion-associated protein EspA (Mycobacterium tuberculosis (strain CDC 1551 / Oshkosh)).